Here is a 145-residue protein sequence, read N- to C-terminus: uncharacterized protein (145 aa).

Positions 97 and 121 each coordinate substrate.

Belongs to the D-isomer specific 2-hydroxyacid dehydrogenase family. FDH subfamily.

This is an uncharacterized protein from Saccharomyces cerevisiae (strain ATCC 204508 / S288c) (Baker's yeast).